The primary structure comprises 119 residues: Large ribosomal subunit protein bL20 (119 aa).

The protein belongs to the bacterial ribosomal protein bL20 family.

Its function is as follows. Binds directly to 23S ribosomal RNA and is necessary for the in vitro assembly process of the 50S ribosomal subunit. It is not involved in the protein synthesizing functions of that subunit. This chain is Large ribosomal subunit protein bL20, found in Shouchella clausii (strain KSM-K16) (Alkalihalobacillus clausii).